Here is a 196-residue protein sequence, read N- to C-terminus: MRGRDEETGEFHDKSRSQNRRDALDVLALGEKLVSLTPAQLARLPVPEDLLPHIAECKRITAHIAHKRQLAFLAKHMRREEDATLDAIRDALDANSETGRREVAMMHRAEDWRERLLAEGDKALAALLDDYPQADRQQLRTLVRNAQAEKAKNKPPRAYREIFQVLRTLMLPAALGLKASDDEVEADDTADASDED.

Belongs to the DarP family.

The protein resides in the cytoplasm. In terms of biological role, member of a network of 50S ribosomal subunit biogenesis factors which assembles along the 30S-50S interface, preventing incorrect 23S rRNA structures from forming. Promotes peptidyl transferase center (PTC) maturation. The sequence is that of Dual-action ribosomal maturation protein DarP from Stenotrophomonas maltophilia (strain R551-3).